A 190-amino-acid chain; its full sequence is Potassium-transporting ATPase KdpC subunit (190 aa).

Residues 10-30 (TFLFLLLITGGVYPLLTTALG) form a helical membrane-spanning segment.

The protein belongs to the KdpC family. As to quaternary structure, the system is composed of three essential subunits: KdpA, KdpB and KdpC.

It is found in the cell inner membrane. Its function is as follows. Part of the high-affinity ATP-driven potassium transport (or Kdp) system, which catalyzes the hydrolysis of ATP coupled with the electrogenic transport of potassium into the cytoplasm. This subunit acts as a catalytic chaperone that increases the ATP-binding affinity of the ATP-hydrolyzing subunit KdpB by the formation of a transient KdpB/KdpC/ATP ternary complex. This Escherichia coli O45:K1 (strain S88 / ExPEC) protein is Potassium-transporting ATPase KdpC subunit.